The following is a 342-amino-acid chain: Phosphate acyltransferase (342 aa).

The protein belongs to the PlsX family. Homodimer. Probably interacts with PlsY.

It localises to the cytoplasm. The enzyme catalyses a fatty acyl-[ACP] + phosphate = an acyl phosphate + holo-[ACP]. Its pathway is lipid metabolism; phospholipid metabolism. Catalyzes the reversible formation of acyl-phosphate (acyl-PO(4)) from acyl-[acyl-carrier-protein] (acyl-ACP). This enzyme utilizes acyl-ACP as fatty acyl donor, but not acyl-CoA. The polypeptide is Phosphate acyltransferase (Shewanella pealeana (strain ATCC 700345 / ANG-SQ1)).